Reading from the N-terminus, the 208-residue chain is uncharacterized protein (208 aa).

Disordered regions lie at residues 74–117 and 181–208; these read FEYK…RDSP and ESKL…RKFK. Residues 184 to 208 are compositionally biased toward polar residues; that stretch reads LGSSEDSGTDRFSSNTSGSSGRKFK.

This is an uncharacterized protein from Mus musculus (Mouse).